The sequence spans 164 residues: Hoefavidin (164 aa).

Positions 1-22 (MNKVLAIVLTITVAGFAQTAFA) are cleaved as a signal peptide. An Avidin-like domain is found at 32–155 (KLLAGASNWV…GQDDFMQSVA (124 aa)). 5 residues coordinate biotin: N42, S46, Y68, N70, and G76. C77 and C108 are joined by a disulfide. Biotin-binding residues include S110, T112, and D148.

It belongs to the avidin/streptavidin family. Exhibits a dynamic oligomeric assembly: the apo form exits as homooctamers, which dissociate into homodimers upon biotin binding. The X-ray structure of the intact hoefavidin reveals unique crystal packing generated by an octameric cylindrical structure wherein the C-terminal segments of each monomer are introduced into the entrance of the biotin-binding site of an adjacent non-canonical monomer.

Its subcellular location is the secreted. Functionally, the exact role played by hoefavidin in the host organism is still obscure. Forms a strong non-covalent complex with biotin and 2-iminobiotin. This Hoeflea phototrophica (strain DSM 17068 / NCIMB 14078 / DFL-43) protein is Hoefavidin.